A 341-amino-acid polypeptide reads, in one-letter code: GTP 3',8-cyclase (341 aa).

The Radical SAM core domain maps to 11–231; the sequence is KRERPLRDLR…DLINQHMPTE (221 aa). R20 provides a ligand contact to GTP. Residues C27 and C31 each contribute to the [4Fe-4S] cluster site. Y33 is a binding site for S-adenosyl-L-methionine. C34 lines the [4Fe-4S] cluster pocket. R75 provides a ligand contact to GTP. G79 contacts S-adenosyl-L-methionine. GTP is bound at residue T106. S130 provides a ligand contact to S-adenosyl-L-methionine. K167 is a GTP binding site. M201 is an S-adenosyl-L-methionine binding site. Positions 265 and 268 each coordinate [4Fe-4S] cluster. 270-272 contacts GTP; sequence RAR. C282 lines the [4Fe-4S] cluster pocket.

It belongs to the radical SAM superfamily. MoaA family. As to quaternary structure, monomer and homodimer. Requires [4Fe-4S] cluster as cofactor.

It catalyses the reaction GTP + AH2 + S-adenosyl-L-methionine = (8S)-3',8-cyclo-7,8-dihydroguanosine 5'-triphosphate + 5'-deoxyadenosine + L-methionine + A + H(+). The protein operates within cofactor biosynthesis; molybdopterin biosynthesis. In terms of biological role, catalyzes the cyclization of GTP to (8S)-3',8-cyclo-7,8-dihydroguanosine 5'-triphosphate. This Bacillus velezensis (strain DSM 23117 / BGSC 10A6 / LMG 26770 / FZB42) (Bacillus amyloliquefaciens subsp. plantarum) protein is GTP 3',8-cyclase.